A 533-amino-acid chain; its full sequence is Decreased expression in renal and prostate cancer protein (533 aa).

The segment covering 1-12 has biased composition (basic and acidic residues); the sequence is MKEPRIFPRERP. 4 disordered regions span residues 1–31, 67–164, 177–259, and 299–350; these read MKEP…GGPV, QNPS…PDPR, MRAG…RAGG, and ASGN…PNSA. A Phosphoserine modification is found at serine 160. Residues 299–309 are compositionally biased toward polar residues; sequence ASGNMGTNPPT. Arginine 368 carries the post-translational modification Asymmetric dimethylarginine. Arginine 396 is modified (omega-N-methylarginine). Residue serine 432 is modified to Phosphoserine.

The protein belongs to the DERPC family.

It localises to the nucleus. Functionally, potential tumor suppressor. The polypeptide is Decreased expression in renal and prostate cancer protein (Mus musculus (Mouse)).